A 150-amino-acid polypeptide reads, in one-letter code: Large ribosomal subunit protein uL13 (150 aa).

This sequence belongs to the universal ribosomal protein uL13 family. In terms of assembly, part of the 50S ribosomal subunit.

In terms of biological role, this protein is one of the early assembly proteins of the 50S ribosomal subunit, although it is not seen to bind rRNA by itself. It is important during the early stages of 50S assembly. This chain is Large ribosomal subunit protein uL13, found in Chlamydia caviae (strain ATCC VR-813 / DSM 19441 / 03DC25 / GPIC) (Chlamydophila caviae).